A 190-amino-acid polypeptide reads, in one-letter code: Peptide methionine sulfoxide reductase A2-2 (190 aa).

Positions 1-20 (MSNDTGADGGAANPDLGPDA) are disordered. The span at 10-20 (GAANPDLGPDA) shows a compositional bias: low complexity.

This sequence belongs to the MsrA Met sulfoxide reductase family.

The protein resides in the cytoplasm. It localises to the cytosol. It catalyses the reaction L-methionyl-[protein] + [thioredoxin]-disulfide + H2O = L-methionyl-(S)-S-oxide-[protein] + [thioredoxin]-dithiol. The catalysed reaction is [thioredoxin]-disulfide + L-methionine + H2O = L-methionine (S)-S-oxide + [thioredoxin]-dithiol. Functionally, catalyzes the reduction of methionine sulfoxide (MetSO) to methionine in proteins. Plays a protective role against oxidative stress by restoring activity to proteins that have been inactivated by methionine oxidation. MSRA family specifically reduces the MetSO S-enantiomer. This Oryza sativa subsp. japonica (Rice) protein is Peptide methionine sulfoxide reductase A2-2 (MSRA2-2).